The primary structure comprises 377 residues: Histidine protein methyltransferase 1 (377 aa).

Belongs to the methyltransferase superfamily. METTL18 family.

The protein localises to the cytoplasm. It localises to the nucleus. It carries out the reaction L-histidyl-[protein] + S-adenosyl-L-methionine = N(tele)-methyl-L-histidyl-[protein] + S-adenosyl-L-homocysteine + H(+). Protein-histidine N-methyltransferase that mediates methylation of RPL3 at 'His-243'. Methylates ribosome-associated RPL3, but not free RPL3, thereby regulating 60S subunit assembly. In addition to RPL3, mediates His methylation of other proteins. The protein is Histidine protein methyltransferase 1 of Saccharomyces cerevisiae (strain ATCC 204508 / S288c) (Baker's yeast).